A 339-amino-acid chain; its full sequence is NmrA-like family domain-containing oxidoreductase cpsB (339 aa).

K142 provides a ligand contact to NADP(+).

The protein belongs to the NmrA-type oxidoreductase family.

It catalyses the reaction didehydrocampesine A + 2 AH2 = campesine A + 2 A. The protein operates within alkaloid biosynthesis. Its function is as follows. Oxidoreductase; part of the gene cluster that mediates the biosynthesis of campesine G, a dimeric indole piperazine alkaloid that shows good insecticidal activity Galleria mellonella. Within the pathway, cpsB reduces the unstable (S,S)-trypyl-valyl dihydropiperazine (didehydrocampesine A) intermediate to (S, S)-trypyl-valyl-piperazine (campesine A) using two equivalents of NAD(P)H. The non-canonical non-ribosomal peptide synthetase cpsA catalyzes the first steps of the pathway by producing L-tryptophanal and L-valinal from their respective amino-acids. These products condensate spontaneously to form trypyl-valyl pyrazine also known as didehydrocampesine A. The NmrA-like family domain-containing oxidoreductase cpsB is the next enzyme in cps pathway and reduces the unstable didehydrocampesine A to campesine A. The methyltransferase cpsF and the acetyltransferase cpsE both recognize N13 of piperazine ring to carry out methylation and acetylation of campesine A to produce campesine C and B, respectively. The cytochrome P450 monooxygenase cpsD then acts as a dimerase that catalyzes oxidative heterocoupling between campesine B and C to produce heterodimers with unexpected 6/5/6/6/6/6/5/6 eight-ring scaffold called campesine D. Finally,the cytochrome P450 monooxygenase cpsC is a regioselective dehydrogenase that catalyzes dehydrogenation reaction towards C2-N1 to produce campesine G. The chain is NmrA-like family domain-containing oxidoreductase cpsB from Aspergillus campestris (strain IBT 28561).